The sequence spans 610 residues: Phosphoenolpyruvate carboxykinase [GTP] (610 aa).

Residues Arg-82 and 221–223 (YGG) contribute to the substrate site. Residues Lys-230 and His-250 each contribute to the Mn(2+) site. Ser-272 contacts substrate. 273–278 (ACGKTN) lines the GTP pocket. The active site involves Cys-274. Mn(2+) is bound at residue Asp-297. 387 to 389 (NSR) contacts substrate. Residues Arg-389, Arg-420, and 515-518 (FGDN) each bind GTP.

This sequence belongs to the phosphoenolpyruvate carboxykinase [GTP] family. Monomer. The cofactor is Mn(2+).

The protein localises to the cytoplasm. The enzyme catalyses oxaloacetate + GTP = phosphoenolpyruvate + GDP + CO2. It participates in carbohydrate biosynthesis; gluconeogenesis. In terms of biological role, involved in the gluconeogenesis. Catalyzes the conversion of oxaloacetate (OAA) to phosphoenolpyruvate (PEP), the rate-limiting step in the metabolic pathway that produces glucose from lactate and other precursors derived from the citric acid cycle. This chain is Phosphoenolpyruvate carboxykinase [GTP], found in Corynebacterium glutamicum (strain ATCC 13032 / DSM 20300 / JCM 1318 / BCRC 11384 / CCUG 27702 / LMG 3730 / NBRC 12168 / NCIMB 10025 / NRRL B-2784 / 534).